The chain runs to 1012 residues: Structural polyprotein (1012 aa).

Asp30 is a binding site for a divalent metal cation. Residues 513–755 (ADKGYEVVAN…AGRQYHLAMA (243 aa)) form the Peptidase S50 domain. Ser652 acts as the Nucleophile in catalysis. Lys692 is an active-site residue. The tract at residues 970–1012 (MEMKHRNPRRAPPKPKPKPNAPTQRPPGRLGRWIRTVSDEDLE) is disordered. Positions 975 to 986 (RNPRRAPPKPKP) are enriched in basic residues. Residues 1003-1012 (IRTVSDEDLE) form an interaction with VP1 protein region.

As to quaternary structure, homotrimer. A central divalent metal stabilizes the VP2 trimer. Interacts with host ITGA4/ITGB1. Homodimer. Interacts (via C-terminus) with VP1 in the cytoplasm. Interacts with VP2. In terms of processing, specific enzymatic cleavages yield mature proteins. The capsid assembly seems to be regulated by polyprotein processing. The protease VP4 cleaves itself off the polyprotein, thus releasing pre-VP2 and VP3 within the infected cell. During capsid assembly, the C-terminus of pre-VP2 is further processed by VP4, giving rise to VP2, the external capsid protein and three small peptides that all stay closely associated with the capsid.

Its subcellular location is the virion. It localises to the host cytoplasm. Its function is as follows. Capsid protein VP2 self assembles to form an icosahedral capsid with a T=13 symmetry, about 70 nm in diameter, and consisting of 260 VP2 trimers. The capsid encapsulates the genomic dsRNA. VP2 is also involved in attachment and entry into the host cell by interacting with host ITGA4/ITGB1. The precursor of VP2 plays an important role in capsid assembly. First, pre-VP2 and VP2 oligomers assemble to form a procapsid. Then, the pre-VP2 intermediates may be processed into VP2 proteins by proteolytic cleavage mediated by VP4 to obtain the mature virion. The final capsid is composed of pentamers and hexamers but VP2 has a natural tendency to assemble into all-pentameric structures. Therefore pre-VP2 may be required to allow formation of the hexameric structures. Functionally, protease VP4 is a serine protease that cleaves the polyprotein into its final products. Pre-VP2 is first partially cleaved, and may be completely processed by VP4 upon capsid maturation. In terms of biological role, capsid protein VP3 plays a key role in virion assembly by providing a scaffold for the capsid made of VP2. May self-assemble to form a T=4-like icosahedral inner-capsid composed of at least 180 trimers. Plays a role in genomic RNA packaging by recruiting VP1 into the capsid and interacting with the dsRNA genome segments to form a ribonucleoprotein complex. Additionally, the interaction of the VP3 C-terminal tail with VP1 removes the inherent structural blockade of the polymerase active site. Thus, VP3 can also function as a transcriptional activator. Its function is as follows. Structural peptide 1 is a small peptide derived from pre-VP2 C-terminus. It destabilizes and perforates cell membranes, suggesting a role during entry. Structural peptide 2 is a small peptide derived from pVP2 C-terminus. It is not essential for the virus viability, but viral growth is affected when missing. Functionally, structural peptide 3 is a small peptide derived from pVP2 C-terminus. It is not essential for the virus viability, but viral growth is affected when missing. In terms of biological role, structural peptide 4 is a small peptide derived from pVP2 C-terminus. It is essential for the virus viability. In Avian infectious bursal disease virus (strain E) (IBDV), this protein is Structural polyprotein.